A 152-amino-acid polypeptide reads, in one-letter code: Prefoldin subunit alpha (152 aa).

A disordered region spans residues Glu110 to Glu152. Positions Thr111–Glu124 are enriched in acidic residues. A compositionally biased stretch (low complexity) spans Leu125–Glu152.

Belongs to the prefoldin alpha subunit family. As to quaternary structure, heterohexamer of two alpha and four beta subunits.

The protein resides in the cytoplasm. Functionally, molecular chaperone capable of stabilizing a range of proteins. Seems to fulfill an ATP-independent, HSP70-like function in archaeal de novo protein folding. This chain is Prefoldin subunit alpha, found in Halorubrum lacusprofundi (strain ATCC 49239 / DSM 5036 / JCM 8891 / ACAM 34).